The primary structure comprises 229 residues: Potassium/proton antiporter CemA (229 aa).

Transmembrane regions (helical) follow at residues 7 to 27, 114 to 134, and 189 to 209; these read FTPL…SLSF, IICF…LVIL, and ILSG…KFWI.

This sequence belongs to the CemA family.

Its subcellular location is the plastid. The protein localises to the chloroplast inner membrane. The catalysed reaction is K(+)(in) + H(+)(out) = K(+)(out) + H(+)(in). Contributes to K(+)/H(+) antiport activity by supporting proton efflux to control proton extrusion and homeostasis in chloroplasts in a light-dependent manner to modulate photosynthesis. Prevents excessive induction of non-photochemical quenching (NPQ) under continuous-light conditions. Indirectly promotes efficient inorganic carbon uptake into chloroplasts. This Panax ginseng (Korean ginseng) protein is Potassium/proton antiporter CemA.